The primary structure comprises 425 residues: CinA-like protein (425 aa).

Belongs to the CinA family.

The protein is CinA-like protein of Desulfovibrio desulfuricans (strain ATCC 27774 / DSM 6949 / MB).